Here is a 266-residue protein sequence, read N- to C-terminus: Glucagon-1 (266 aa).

A signal peptide spans 1–20; sequence MKSTCYMIGILLMILQNTYQ. Propeptides lie at residues 21–50, 84–95, 136–140, 175–178, 213–224, and 261–266; these read SPVP…LKEV, SGELSRRNADYE, NAEFE, IRYS, NFSEVHSVEEMD, and DLLEEQ. A compositionally biased stretch (polar residues) spans 23 to 32; sequence VPETDANSRS. Positions 23–44 are disordered; that stretch reads VPETDANSRSVKAARNEAVDDS.

Belongs to the glucagon family.

Its subcellular location is the secreted. In terms of biological role, promotes hydrolysis of glycogen and lipids, and raises the blood sugar level. This chain is Glucagon-1 (gcg1), found in Xenopus laevis (African clawed frog).